Here is a 333-residue protein sequence, read N- to C-terminus: Fatty acid hydroxylase domain-containing protein 2 (333 aa).

6 helical membrane-spanning segments follow: residues 29–49, 77–97, 134–154, 168–188, 215–235, and 237–257; these read FILG…TWHL, ILFF…FNGL, TVLF…YPFL, FHWF…LFYY, VISL…PAIV, and PLVM…ALII. Residues 176–299 enclose the Fatty acid hydroxylase domain; that stretch reads AIFTLIEEVL…LGVLDHLHGT (124 aa).

Belongs to the sterol desaturase family.

It localises to the cytoplasm. Its subcellular location is the membrane. Functionally, promotes megakaryocyte differentiation by enhancing ERK phosphorylation and up-regulating RUNX1 expression. The protein is Fatty acid hydroxylase domain-containing protein 2 (FAXDC2) of Macaca fascicularis (Crab-eating macaque).